A 144-amino-acid chain; its full sequence is Large ribosomal subunit protein uL15 (144 aa).

Positions 1-57 (MKLNDLSPAPGSRREKHRPGRGIGSGLGKTGGRGHKGQSSRSGGTIAPGFEGGQQPL) are disordered. Over residues 21-31 (RGIGSGLGKTG) the composition is skewed to gly residues.

The protein belongs to the universal ribosomal protein uL15 family. In terms of assembly, part of the 50S ribosomal subunit.

Binds to the 23S rRNA. The chain is Large ribosomal subunit protein uL15 from Pseudomonas savastanoi pv. phaseolicola (strain 1448A / Race 6) (Pseudomonas syringae pv. phaseolicola (strain 1448A / Race 6)).